A 425-amino-acid polypeptide reads, in one-letter code: GTPase Obg (425 aa).

One can recognise an Obg domain in the interval 1-158 (MFRDSAKIYV…YSLILEMKMI (158 aa)). Residues 159 to 330 (ADVGLVGYPN…LLYAVSETLK (172 aa)) form the OBG-type G domain. GTP-binding positions include 165–172 (GYPNVGKS), 190–194 (FTTLV), 212–215 (DIPG), 282–285 (NKMD), and 311–313 (SAA). Residues Ser172 and Thr192 each contribute to the Mg(2+) site. One can recognise an OCT domain in the interval 348-425 (YKVQEEKPFE…IYDTEFDYTR (78 aa)).

Belongs to the TRAFAC class OBG-HflX-like GTPase superfamily. OBG GTPase family. Monomer. It depends on Mg(2+) as a cofactor.

It localises to the cytoplasm. In terms of biological role, an essential GTPase which binds GTP, GDP and possibly (p)ppGpp with moderate affinity, with high nucleotide exchange rates and a fairly low GTP hydrolysis rate. Plays a role in control of the cell cycle, stress response, ribosome biogenesis and in those bacteria that undergo differentiation, in morphogenesis control. This chain is GTPase Obg, found in Ruminiclostridium cellulolyticum (strain ATCC 35319 / DSM 5812 / JCM 6584 / H10) (Clostridium cellulolyticum).